The primary structure comprises 415 residues: Transcription factor gsfR2 (415 aa).

A DNA-binding region (zn(2)-C6 fungal-type) is located at residues 9–36; sequence CITCVQSKRKCDQGLPKCQRCLAKNIHC. Residues 65–91 are disordered; sequence AEEPSRGCQLQRSPARPTSPTHSPHAN. Residues 72-88 show a composition bias toward polar residues; that stretch reads CQLQRSPARPTSPTHSP.

It localises to the nucleus. Transcription factor that regulates expression of the gene cluster that mediates the biosynthesis of Griseofulvin, an important antifungal drug that has been in use for a long time for treating dermatophyte infections. The protein is Transcription factor gsfR2 of Penicillium aethiopicum.